Here is a 394-residue protein sequence, read N- to C-terminus: 4-hydroxyphenylpyruvate dioxygenase (394 aa).

VOC domains follow at residues 27-161 and 193-351; these read GYDH…LIER and HIDH…LFTK. Residues His-196, His-279, and Glu-362 each coordinate Fe cation.

The protein belongs to the 4HPPD family. Requires Fe cation as cofactor.

The enzyme catalyses 3-(4-hydroxyphenyl)pyruvate + O2 = homogentisate + CO2. The protein operates within amino-acid degradation; L-phenylalanine degradation; acetoacetate and fumarate from L-phenylalanine: step 3/6. This is 4-hydroxyphenylpyruvate dioxygenase from Yarrowia lipolytica (strain CLIB 122 / E 150) (Yeast).